The primary structure comprises 155 residues: MFLISGISSILAIGLLSPVQSIVCLIVLFVSAAISLYSNGFVLMGILYVLIYVGAIAILFLFILSLLNIEYNYKGTIHPLIFTILIICLIPLDLSYETYGIVENVNIAYPFNSLLDWDLELTTVGSLLYTEYAIPMILIGLILILSVIGAIAITK.

Transmembrane regions (helical) follow at residues 10–30 (ILAI…VLFV), 43–63 (LMGI…FLFI), 75–95 (GTIH…LDLS), and 133–153 (AIPM…AIAI).

Belongs to the complex I subunit 6 family.

It localises to the mitochondrion membrane. It carries out the reaction a ubiquinone + NADH + 5 H(+)(in) = a ubiquinol + NAD(+) + 4 H(+)(out). Functionally, core subunit of the mitochondrial membrane respiratory chain NADH dehydrogenase (Complex I) that is believed to belong to the minimal assembly required for catalysis. Complex I functions in the transfer of electrons from NADH to the respiratory chain. The immediate electron acceptor for the enzyme is believed to be ubiquinone. The chain is NADH-ubiquinone oxidoreductase chain 6 (ND6) from Candida parapsilosis (Yeast).